Reading from the N-terminus, the 468-residue chain is 3-isopropylmalate dehydratase large subunit (468 aa).

[4Fe-4S] cluster contacts are provided by cysteine 349, cysteine 409, and cysteine 412.

Belongs to the aconitase/IPM isomerase family. LeuC type 1 subfamily. Heterodimer of LeuC and LeuD. [4Fe-4S] cluster is required as a cofactor.

The enzyme catalyses (2R,3S)-3-isopropylmalate = (2S)-2-isopropylmalate. Its pathway is amino-acid biosynthesis; L-leucine biosynthesis; L-leucine from 3-methyl-2-oxobutanoate: step 2/4. Its function is as follows. Catalyzes the isomerization between 2-isopropylmalate and 3-isopropylmalate, via the formation of 2-isopropylmaleate. The protein is 3-isopropylmalate dehydratase large subunit of Jannaschia sp. (strain CCS1).